The primary structure comprises 225 residues: Histone-arginine methyltransferase METTL23 (225 aa).

The protein belongs to the methyltransferase superfamily. METTL23 family. In terms of assembly, interacts with HSPA5, HSP90B1, TUBULIN, UGGT1 and UGGT2. Interacts with TET3. Interacts with STPG4.

The protein localises to the nucleus. The protein resides in the cytoplasm. It catalyses the reaction L-arginyl-[protein] + 2 S-adenosyl-L-methionine = N(omega),N(omega)-dimethyl-L-arginyl-[protein] + 2 S-adenosyl-L-homocysteine + 2 H(+). Histone methyltransferase that dimethylates histone H3 at 'Arg-17', forming asymmetric dimethylarginine (H3R17me2a), leading to activate transcription via chromatin remodeling. Maternal factor involved in epigenetic chromatin reprogramming of the paternal genome in the zygote: mediates H3R17me2a, promoting histone H3.3 incorporation in the male pronucleus, leading to TET3 recruitment and subsequent DNA demethylation. The sequence is that of Histone-arginine methyltransferase METTL23 from Rattus norvegicus (Rat).